We begin with the raw amino-acid sequence, 116 residues long: Staphylococcal complement inhibitor (116 aa).

Positions 1–31 (MKIRKSILAGTLAIVLASPLVTNLDKNEAQA) are cleaved as a signal peptide. Residues 62 to 79 (LATGSLNTYYKRTIKISG) are essential for activity.

This sequence belongs to the SCIN family.

It is found in the secreted. Its function is as follows. Involved in countering the first line of host defense mechanisms. Efficiently inhibits opsonization, phagocytosis and killing of S.aureus by human neutrophils. Acts by binding and stabilizing human C3 convertases (C4b2a and C3bBb), leading to their inactivation. The convertases are no longer able to cleave complement C3, therefore preventing further C3b deposition on the bacterial surface and phagocytosis of the bacterium. Also prevents C5a-induced neutrophil responses. The chain is Staphylococcal complement inhibitor (scn) from Staphylococcus aureus (strain Mu50 / ATCC 700699).